A 357-amino-acid chain; its full sequence is A-type ATP synthase subunit C (357 aa).

The protein belongs to the V-ATPase V0D/AC39 subunit family. As to quaternary structure, has multiple subunits with at least A(3), B(3), C, D, E, F, H, I and proteolipid K(x).

The protein resides in the cell membrane. Component of the A-type ATP synthase that produces ATP from ADP in the presence of a proton gradient across the membrane. The chain is A-type ATP synthase subunit C from Methanococcoides burtonii (strain DSM 6242 / NBRC 107633 / OCM 468 / ACE-M).